A 195-amino-acid chain; its full sequence is ATP-dependent Clp protease proteolytic subunit (195 aa).

Ser-98 (nucleophile) is an active-site residue. His-123 is an active-site residue.

The protein belongs to the peptidase S14 family. In terms of assembly, fourteen ClpP subunits assemble into 2 heptameric rings which stack back to back to give a disk-like structure with a central cavity, resembling the structure of eukaryotic proteasomes.

It localises to the cytoplasm. The enzyme catalyses Hydrolysis of proteins to small peptides in the presence of ATP and magnesium. alpha-casein is the usual test substrate. In the absence of ATP, only oligopeptides shorter than five residues are hydrolyzed (such as succinyl-Leu-Tyr-|-NHMec, and Leu-Tyr-Leu-|-Tyr-Trp, in which cleavage of the -Tyr-|-Leu- and -Tyr-|-Trp bonds also occurs).. Its function is as follows. Cleaves peptides in various proteins in a process that requires ATP hydrolysis. Has a chymotrypsin-like activity. Plays a major role in the degradation of misfolded proteins. The sequence is that of ATP-dependent Clp protease proteolytic subunit from Alkaliphilus oremlandii (strain OhILAs) (Clostridium oremlandii (strain OhILAs)).